Consider the following 98-residue polypeptide: Flagellar hook-basal body complex protein FliE (98 aa).

This sequence belongs to the FliE family.

It localises to the bacterial flagellum basal body. This chain is Flagellar hook-basal body complex protein FliE, found in Listeria monocytogenes serovar 1/2a (strain ATCC BAA-679 / EGD-e).